The following is a 98-amino-acid chain: Cuticle protein 67, isoform A (98 aa).

Tandem repeats lie at residues 7-10 (AAPA), 15-18 (AAPA), 22-25 (AAPA), 79-82 (AAPA), 86-89 (AAPA), and 92-95 (AAPA).

In terms of biological role, component of the cuticle of migratory locust which contains more than 100 different structural proteins. This is Cuticle protein 67, isoform A from Locusta migratoria (Migratory locust).